The sequence spans 219 residues: 2-hydroxy-3-keto-5-methylthiopentenyl-1-phosphate phosphatase (219 aa).

This sequence belongs to the HAD-like hydrolase superfamily. MtnX family.

It carries out the reaction 2-hydroxy-5-methylsulfanyl-3-oxopent-1-enyl phosphate + H2O = 1,2-dihydroxy-5-(methylsulfanyl)pent-1-en-3-one + phosphate. The protein operates within amino-acid biosynthesis; L-methionine biosynthesis via salvage pathway; L-methionine from S-methyl-5-thio-alpha-D-ribose 1-phosphate: step 4/6. Functionally, dephosphorylates 2-hydroxy-3-keto-5-methylthiopentenyl-1-phosphate (HK-MTPenyl-1-P) yielding 1,2-dihydroxy-3-keto-5-methylthiopentene (DHK-MTPene). In Bacillus cereus (strain ATCC 14579 / DSM 31 / CCUG 7414 / JCM 2152 / NBRC 15305 / NCIMB 9373 / NCTC 2599 / NRRL B-3711), this protein is 2-hydroxy-3-keto-5-methylthiopentenyl-1-phosphate phosphatase.